The primary structure comprises 184 residues: UPF0149 protein Avin_47340 (184 aa).

This sequence belongs to the UPF0149 family.

The protein is UPF0149 protein Avin_47340 of Azotobacter vinelandii (strain DJ / ATCC BAA-1303).